Reading from the N-terminus, the 96-residue chain is UPF0235 protein YggU (96 aa).

The protein belongs to the UPF0235 family.

The chain is UPF0235 protein YggU from Salmonella typhi.